We begin with the raw amino-acid sequence, 392 residues long: MAKSKFERNKPHVNIGTIGHVDHGKTSLTAAITKYFGEFKAYDQIDAAPEEKARGITISTAHVEYETPARHYAHVDCPGHADYVKNMITGAAQMDGAILVCSAADGPMPQTREHILLARQVGVPAIVVFLNKVDQVDDAELLELVELEVRELLSSYDFPGDDIPVVKGSALAALEDSDKKIGEDAIRELMAAVDSYIPTPERPVDQPFLMPIEDVFSISGRGTVVTGRVERGIIKVGEEVEIVGIRPTSKTTVTGVEMFRKLLDQGQAGDNIGALIRGVNRDGVERGQILCKPGSVKPHKKFKAEAYILTKEEGGRHTPFFTNYRPQFYFRTTDVTGIVTLPEGTEMVMPGDNVTVDVELIVPIAMEEKLRFAIREGGRTVGAGIVAIESLE.

The 192-residue stretch at 10-201 (KPHVNIGTIG…AVDSYIPTPE (192 aa)) folds into the tr-type G domain. Residues 19–26 (GHVDHGKT) are G1. 19 to 26 (GHVDHGKT) lines the GTP pocket. Thr26 is a Mg(2+) binding site. The interval 55–59 (GITIS) is G2. Residues 76–79 (DCPG) form a G3 region. Residues 76–80 (DCPGH) and 131–134 (NKVD) contribute to the GTP site. The segment at 131 to 134 (NKVD) is G4. The G5 stretch occupies residues 169 to 171 (SAL).

Belongs to the TRAFAC class translation factor GTPase superfamily. Classic translation factor GTPase family. EF-Tu/EF-1A subfamily. Monomer.

Its subcellular location is the cytoplasm. The catalysed reaction is GTP + H2O = GDP + phosphate + H(+). Its function is as follows. GTP hydrolase that promotes the GTP-dependent binding of aminoacyl-tRNA to the A-site of ribosomes during protein biosynthesis. This is Elongation factor Tu 2 from Rhizobium etli (strain ATCC 51251 / DSM 11541 / JCM 21823 / NBRC 15573 / CFN 42).